Reading from the N-terminus, the 104-residue chain is UPF0145 protein VIBHAR_02090 (104 aa).

This sequence belongs to the UPF0145 family.

This is UPF0145 protein VIBHAR_02090 from Vibrio campbellii (strain ATCC BAA-1116).